Here is a 42-residue protein sequence, read N- to C-terminus: Photosystem I reaction center subunit IX (42 aa).

A helical transmembrane segment spans residues 7 to 27 (FLSTAPVLIMALLTVTAGILI).

Belongs to the PsaJ family.

It localises to the cellular thylakoid membrane. In terms of biological role, may help in the organization of the PsaE and PsaF subunits. The protein is Photosystem I reaction center subunit IX of Crocosphaera subtropica (strain ATCC 51142 / BH68) (Cyanothece sp. (strain ATCC 51142)).